The primary structure comprises 340 residues: Lipoyl synthase (340 aa).

[4Fe-4S] cluster is bound by residues cysteine 83, cysteine 88, cysteine 94, cysteine 109, cysteine 113, cysteine 116, and serine 323. The Radical SAM core domain occupies 95–312 (FSGGTATFMI…AEEGYKMGFK (218 aa)).

This sequence belongs to the radical SAM superfamily. Lipoyl synthase family. Requires [4Fe-4S] cluster as cofactor.

It is found in the cytoplasm. It catalyses the reaction [[Fe-S] cluster scaffold protein carrying a second [4Fe-4S](2+) cluster] + N(6)-octanoyl-L-lysyl-[protein] + 2 oxidized [2Fe-2S]-[ferredoxin] + 2 S-adenosyl-L-methionine + 4 H(+) = [[Fe-S] cluster scaffold protein] + N(6)-[(R)-dihydrolipoyl]-L-lysyl-[protein] + 4 Fe(3+) + 2 hydrogen sulfide + 2 5'-deoxyadenosine + 2 L-methionine + 2 reduced [2Fe-2S]-[ferredoxin]. Its pathway is protein modification; protein lipoylation via endogenous pathway; protein N(6)-(lipoyl)lysine from octanoyl-[acyl-carrier-protein]: step 2/2. Functionally, catalyzes the radical-mediated insertion of two sulfur atoms into the C-6 and C-8 positions of the octanoyl moiety bound to the lipoyl domains of lipoate-dependent enzymes, thereby converting the octanoylated domains into lipoylated derivatives. The polypeptide is Lipoyl synthase (Pseudomonas fluorescens (strain Pf0-1)).